Here is a 130-residue protein sequence, read N- to C-terminus: Osteocrin (130 aa).

Residues Met1–Ala25 form the signal peptide. Arg129 is subject to Arginine amide.

The protein belongs to the Osteocrin family. As to quaternary structure, interacts with NPR3. Expressed in skeletal muscle and to a much lesser extent in bone, brown adipose tissue, spleen and testis. Not expressed in neurons.

It localises to the secreted. In terms of biological role, hormone that acts as a ligand for natriuretic peptide receptor NPR3/NPR-C and promotes bone growth and physical endurance in muscle. Acts as a regulator of osteoblast differentiation and bone growth by binding to natriuretic peptide receptor NPR3/NPR-C, thereby preventing binding between NPR3/NPR-C and natriuretic peptides, leading to increase cGMP production. Required to enhance physical endurance: induced following physical exercise in muscle and promotes cGMP production, probably by interacting with NPR3/NPR-C. May act as an autocrine and paracrine factor linked to glucose metabolism in skeletal muscle. In Mus musculus (Mouse), this protein is Osteocrin.